The following is a 98-amino-acid chain: NADH-ubiquinone oxidoreductase chain 4L (98 aa).

The next 3 helical transmembrane spans lie at 1-21 (MSLT…GLLM), 29-49 (SLLC…MAIL), and 61-81 (IILL…LVMV).

The protein belongs to the complex I subunit 4L family. Core subunit of respiratory chain NADH dehydrogenase (Complex I) which is composed of 45 different subunits.

The protein localises to the mitochondrion inner membrane. The enzyme catalyses a ubiquinone + NADH + 5 H(+)(in) = a ubiquinol + NAD(+) + 4 H(+)(out). Its function is as follows. Core subunit of the mitochondrial membrane respiratory chain NADH dehydrogenase (Complex I) which catalyzes electron transfer from NADH through the respiratory chain, using ubiquinone as an electron acceptor. Part of the enzyme membrane arm which is embedded in the lipid bilayer and involved in proton translocation. The polypeptide is NADH-ubiquinone oxidoreductase chain 4L (MT-ND4L) (Vampyressa melissa (Melissa's yellow-eared bat)).